Here is a 537-residue protein sequence, read N- to C-terminus: CTP synthase (537 aa).

The interval 1–269 is amidoligase domain; sequence MNQTKYIFVT…DVVALKKLDL (269 aa). Serine 15 serves as a coordination point for CTP. Serine 15 contributes to the UTP binding site. 16-21 lines the ATP pocket; that stretch reads SLGKGI. Tyrosine 56 serves as a coordination point for L-glutamine. Residue aspartate 73 participates in ATP binding. 2 residues coordinate Mg(2+): aspartate 73 and glutamate 143. CTP-binding positions include 150-152, 190-195, and lysine 226; these read DIE and KTKPTQ. UTP-binding positions include 190–195 and lysine 226; that span reads KTKPTQ. Residues 295–537 enclose the Glutamine amidotransferase type-1 domain; it reads NIGLVGKYVE…VAAAVNAHKK (243 aa). Glycine 357 provides a ligand contact to L-glutamine. The active-site Nucleophile; for glutamine hydrolysis is cysteine 384. L-glutamine contacts are provided by residues 385 to 388, glutamate 408, and arginine 465; that span reads LGMQ. Active-site residues include histidine 510 and glutamate 512.

The protein belongs to the CTP synthase family. In terms of assembly, homotetramer.

The enzyme catalyses UTP + L-glutamine + ATP + H2O = CTP + L-glutamate + ADP + phosphate + 2 H(+). It catalyses the reaction L-glutamine + H2O = L-glutamate + NH4(+). It carries out the reaction UTP + NH4(+) + ATP = CTP + ADP + phosphate + 2 H(+). Its pathway is pyrimidine metabolism; CTP biosynthesis via de novo pathway; CTP from UDP: step 2/2. Its activity is regulated as follows. Allosterically activated by GTP, when glutamine is the substrate; GTP has no effect on the reaction when ammonia is the substrate. The allosteric effector GTP functions by stabilizing the protein conformation that binds the tetrahedral intermediate(s) formed during glutamine hydrolysis. Inhibited by the product CTP, via allosteric rather than competitive inhibition. Its function is as follows. Catalyzes the ATP-dependent amination of UTP to CTP with either L-glutamine or ammonia as the source of nitrogen. Regulates intracellular CTP levels through interactions with the four ribonucleotide triphosphates. The sequence is that of CTP synthase from Flavobacterium johnsoniae (strain ATCC 17061 / DSM 2064 / JCM 8514 / BCRC 14874 / CCUG 350202 / NBRC 14942 / NCIMB 11054 / UW101) (Cytophaga johnsonae).